A 552-amino-acid polypeptide reads, in one-letter code: DnaJ homolog subfamily C member 1 (552 aa).

An N-terminal signal peptide occupies residues 1–43 (MWVPGFGSARLPQRRRSGLESSSVRPLWLLLLFLLAAVRPVRA). The Lumenal segment spans residues 44 to 149 (WESGDLELFD…RRVRKMSNAE (106 aa)). One can recognise a J domain in the interval 56-129 (EEVQLNFYEF…RYDDVLINGL (74 aa)). The helical transmembrane segment at 150 to 170 (LALLLFIILTVGHYAVVWSIY) threads the bilayer. Residues 171 to 552 (LEKQLDELLG…LVQKKKQAKS (382 aa)) are Cytoplasmic-facing. Residues 323-377 (RQAPEWTEEDLSQLTRSMVKFPGGTPGRWDKIAHELGRSVTDVTTKAKELKDSVT) enclose the SANT 1 domain. Residues 370–495 (KELKDSVTSS…ERTRAAEEAW (126 aa)) form a disordered region. Ser-379 is subject to Phosphoserine. Over residues 419–431 (MEDEEHEAAEGEQ) the composition is skewed to acidic residues. Residues 453 to 470 (TRVEPEEKLRGKRQKDFD) are compositionally biased toward basic and acidic residues. Phosphoserine is present on residues Ser-477 and Ser-478. Over residues 480-492 (EEKQRKERTRAAE) the composition is skewed to basic and acidic residues. The SANT 2 domain occupies 490–545 (AAEEAWTQSQQKLLELALQQYPKGASDRWDKIAKCVPSKSKEDCIARYKLLVELVQ).

Interacts (via J domain) with HSPA5. Interacts (via cytosolic domain) with ribosomes. Interacts (via SANT 2 domain) with SERPINA3; the interaction delays the formation of the covalent inhibitory complex SERPINA3-chymotrypsin, but does not alter the catalytic activity of SERPINA3. Interacts (via SANT 2 domain) with ITIH4 (via C-terminus); the interaction protects ITIH4 against in vitro cleavage by kallikrein. Widely expressed.

Its subcellular location is the endoplasmic reticulum membrane. It is found in the nucleus membrane. It localises to the microsome membrane. Functionally, may modulate protein synthesis. This is DnaJ homolog subfamily C member 1 (Dnajc1) from Mus musculus (Mouse).